We begin with the raw amino-acid sequence, 431 residues long: NADH-quinone oxidoreductase subunit D 2 (431 aa).

The segment at 1–37 is disordered; that stretch reads MSEAKGVGGIDPRATPGSAGAGERPPMGTLSPRAGEG.

It belongs to the complex I 49 kDa subunit family. NDH-1 is composed of 14 different subunits. Subunits NuoB, C, D, E, F, and G constitute the peripheral sector of the complex.

It localises to the cell inner membrane. The enzyme catalyses a quinone + NADH + 5 H(+)(in) = a quinol + NAD(+) + 4 H(+)(out). Functionally, NDH-1 shuttles electrons from NADH, via FMN and iron-sulfur (Fe-S) centers, to quinones in the respiratory chain. The immediate electron acceptor for the enzyme in this species is believed to be ubiquinone. Couples the redox reaction to proton translocation (for every two electrons transferred, four hydrogen ions are translocated across the cytoplasmic membrane), and thus conserves the redox energy in a proton gradient. The sequence is that of NADH-quinone oxidoreductase subunit D 2 from Anaeromyxobacter sp. (strain K).